Reading from the N-terminus, the 80-residue chain is Serine rich endogenous peptide 15 (80 aa).

Residues 1–28 (MSKEKSYVIALLLSLLLCLSFQVGVSEA) form the signal peptide. Short sequence motifs (SCOOP motif) lie at residues 32-46 (AVTT…CANG) and 66-80 (PRVA…GKGP). The tract at residues 37-80 (YSDSPRCANGSSASPPTRHCPRGRPRPPTPRVAVHSNSTKGKGP) is disordered. 2 consecutive short sequence motifs (sxS motif essential for MIK2 binding) follow at residues 38 to 40 (SDS) and 72 to 74 (SNS). The span at 71–80 (HSNSTKGKGP) shows a compositional bias: polar residues.

Belongs to the serine rich endogenous peptide (SCOOP) phytocytokine family. Interacts with MIK2 (via extracellular leucine-rich repeat domain); this interaction triggers the formation of complex between MIK2 and the BAK1/SERK3 and SERK4 coreceptors, and subsequent BAK1 activation by phosphorylation. Mostly expressed in leaves, and, to a lower extent, in seedlings shoots, roots, stems, siliques, seeds and flowers.

The protein localises to the cell membrane. It localises to the secreted. Its subcellular location is the extracellular space. The protein resides in the apoplast. It is found in the endoplasmic reticulum. The protein localises to the golgi apparatus. Brassicaceae-specific phytocytokine (plant endogenous peptide released into the apoplast) perceived by MIK2 in a BAK1/SERK3 and SERK4 coreceptors-dependent manner, that modulates various physiological and antimicrobial processes including growth prevention and reactive oxygen species (ROS) response regulation. Inhibits root growth. This Arabidopsis thaliana (Mouse-ear cress) protein is Serine rich endogenous peptide 15.